A 131-amino-acid polypeptide reads, in one-letter code: Large ribosomal subunit protein bL20 (131 aa).

It belongs to the bacterial ribosomal protein bL20 family.

Binds directly to 23S ribosomal RNA and is necessary for the in vitro assembly process of the 50S ribosomal subunit. It is not involved in the protein synthesizing functions of that subunit. The chain is Large ribosomal subunit protein bL20 from Mycolicibacterium paratuberculosis (strain ATCC BAA-968 / K-10) (Mycobacterium paratuberculosis).